The chain runs to 1382 residues: Hepatocyte growth factor receptor (1382 aa).

A signal peptide spans 1-24; it reads MKAPAVLAPGVLVLLFTLVRKSHG. At 25-935 the chain is on the extracellular side; sequence ECEEALAKSK…VQPDQNFTGL (911 aa). In terms of domain architecture, Sema spans 27–516; that stretch reads EEALAKSKMN…TGKKITKIPL (490 aa). The N-linked (GlcNAc...) asparagine glycan is linked to N45. 4 disulfide bridges follow: C95/C101, C98/C160, C133/C141, and C173/C176. Residue N106 is glycosylated (N-linked (GlcNAc...) asparagine). N-linked (GlcNAc...) asparagine glycosylation is found at N203 and N359. Cystine bridges form between C299/C364 and C386/C398. N400, N406, and N450 each carry an N-linked (GlcNAc...) asparagine glycan. Disulfide bonds link C521-C539, C527-C562, C530-C546, and C542-C552. 3 IPT/TIG domains span residues 564-656, 658-740, and 743-837; these read PTIY…FSYV, PVIT…FSYQ, and PTVY…LIYV. O-linked (Man) threonine glycosylation occurs at T583. N608 and N636 each carry an N-linked (GlcNAc...) asparagine glycan. O-linked (Man) threonine glycosylation is present at T677. N751 carries an N-linked (GlcNAc...) asparagine glycan. O-linked (Man) threonine glycosylation occurs at T762. N-linked (GlcNAc...) asparagine glycosylation is found at N786, N880, and N931. A helical transmembrane segment spans residues 936–956; sequence IVGVVSISIILLLLLGLFLWL. At 957–1382 the chain is on the cytoplasmic side; the sequence is KKRKQIKDLG…QDSVDDEVDT (426 aa). A Phosphoserine modification is found at S967. Phosphothreonine is present on T978. Phosphoserine occurs at positions 991, 998, and 1001. Position 1004 is a phosphotyrosine (Y1004). Positions 1079-1346 constitute a Protein kinase domain; that stretch reads VHFNEVIGRG…RISAIFSTFI (268 aa). ATP contacts are provided by residues 1085–1093 and K1111; that span reads IGRGHFGCV. D1205 (proton acceptor) is an active-site residue. An interaction with RANBP9 region spans residues 1213–1382; the sequence is LDEKFTVKVA…QDSVDDEVDT (170 aa). Y1231 is modified (phosphotyrosine). Y1235 and Y1236 each carry phosphotyrosine; by autocatalysis. The residue at position 1290 (T1290) is a Phosphothreonine. An interaction with MUC20 region spans residues 1321 to 1360; that stretch reads WHPKAEMRPSFSELVSRISAIFSTFIGEHYVHVNTTYVNV. Phosphotyrosine; by autocatalysis occurs at positions 1350 and 1357. Position 1366 is a phosphotyrosine (Y1366).

The protein belongs to the protein kinase superfamily. Tyr protein kinase family. As to quaternary structure, heterodimer made of an alpha chain (50 kDa) and a beta chain (145 kDa) which are disulfide linked. Binds PLXNB1. Interacts when phosphorylated with downstream effectors including STAT3, PIK3R1, SRC, PCLG1, GRB2 and GAB1. Interacts with SPSB1, SPSB2 and SPSB4. Interacts with INPP5D/SHIP1. When phosphorylated at Tyr-1357, interacts with INPPL1/SHIP2. Interacts with RANBP9 and RANBP10, as well as SPSB1, SPSB2, SPSB3 and SPSB4. SPSB1 binding occurs in the presence and in the absence of HGF, however HGF treatment has a positive effect on this interaction. Interacts with MUC20; prevents interaction with GRB2 and suppresses hepatocyte growth factor-induced cell proliferation. Interacts with GRB10. Interacts with PTPN1 and PTPN2. Interacts with HSP90AA1 and HSP90AB1; the interaction suppresses MET kinase activity. Interacts with tensin TNS3. Interacts (when phosphorylated) with tensin TNS4 (via SH2 domain); the interaction increases MET protein stability by inhibiting MET endocytosis and subsequent lysosomal degradation. Autophosphorylated in response to ligand binding on Tyr-1235 and Tyr-1236 in the kinase domain leading to further phosphorylation of Tyr-1350 and Tyr-1357 in the C-terminal multifunctional docking site. Dephosphorylated by PTPRJ at Tyr-1350 and Tyr-1366. Dephosphorylated by PTPN1 and PTPN2. Post-translationally, ubiquitinated. Ubiquitination by CBL regulates the receptor stability and activity through proteasomal degradation. In terms of processing, O-mannosylation of IPT/TIG domains by TMEM260 is required for protein maturation. O-mannosylated residues are composed of single mannose glycans that are not elongated or modified.

The protein localises to the membrane. The enzyme catalyses L-tyrosyl-[protein] + ATP = O-phospho-L-tyrosyl-[protein] + ADP + H(+). With respect to regulation, in its inactive state, the C-terminal tail interacts with the catalytic domain and inhibits the kinase activity. Upon ligand binding, the C-terminal tail is displaced and becomes phosphorylated, thus increasing the kinase activity. Functionally, receptor tyrosine kinase that transduces signals from the extracellular matrix into the cytoplasm by binding to hepatocyte growth factor/HGF ligand. Regulates many physiological processes including proliferation, scattering, morphogenesis and survival. Ligand binding at the cell surface induces autophosphorylation of MET on its intracellular domain that provides docking sites for downstream signaling molecules. Following activation by ligand, interacts with the PI3-kinase subunit PIK3R1, PLCG1, SRC, GRB2, STAT3 or the adapter GAB1. Recruitment of these downstream effectors by MET leads to the activation of several signaling cascades including the RAS-ERK, PI3 kinase-AKT, or PLCgamma-PKC. The RAS-ERK activation is associated with the morphogenetic effects while PI3K/AKT coordinates prosurvival effects. During embryonic development, MET signaling plays a role in gastrulation, development and migration of muscles and neuronal precursors, angiogenesis and kidney formation. In adults, participates in wound healing as well as organ regeneration and tissue remodeling. Also promotes differentiation and proliferation of hematopoietic cells. The protein is Hepatocyte growth factor receptor (MET) of Loxodonta africana (African elephant).